The following is a 284-amino-acid chain: MLSKQIPLGIYEKALPAGECWLERLRLAKTLGFDFVEMSVDETNERLSRLDWSRVQRLALVNAIVETGVRVPSMCLSAHRRFPLVSEDDAVRAQGLEIMRKAIQFAQDVGIRVIQLSGYDVYYQEANNETRRRFRDGLKESVEMASRAQVTLAMEIMDYPLMNSISKALGYAHYLNNPWFQLYPDIGNLSAWDNDVQMELQAGIGHIVAVHVKDTKPGVFKNVPFGEGVVDFERCFETLKQSGYCGPYLIEMWSETAEDPAAEVVKACDWVKARMAKAGMVEAA.

The protein belongs to the L-ribulose-5-phosphate 3-epimerase family.

The catalysed reaction is L-ribulose 5-phosphate = L-xylulose 5-phosphate. The protein operates within cofactor degradation; L-ascorbate degradation; D-xylulose 5-phosphate from L-ascorbate: step 3/4. Its function is as follows. Catalyzes the isomerization of L-xylulose-5-phosphate to L-ribulose-5-phosphate. Is involved in the anaerobic L-ascorbate utilization. This is L-ribulose-5-phosphate 3-epimerase UlaE from Shigella flexneri serotype 5b (strain 8401).